A 468-amino-acid chain; its full sequence is UDP-N-acetylmuramate--L-alanine ligase (468 aa).

Position 114 to 120 (114 to 120 (GTHGKTT)) interacts with ATP.

This sequence belongs to the MurCDEF family.

The protein resides in the cytoplasm. The catalysed reaction is UDP-N-acetyl-alpha-D-muramate + L-alanine + ATP = UDP-N-acetyl-alpha-D-muramoyl-L-alanine + ADP + phosphate + H(+). Its pathway is cell wall biogenesis; peptidoglycan biosynthesis. Functionally, cell wall formation. This chain is UDP-N-acetylmuramate--L-alanine ligase, found in Methylorubrum populi (strain ATCC BAA-705 / NCIMB 13946 / BJ001) (Methylobacterium populi).